A 1906-amino-acid chain; its full sequence is Retinoic acid-induced protein 1 (1906 aa).

Disordered stretches follow at residues 1 to 261 (MQSF…APGQ), 273 to 299 (RLSY…RHHA), 335 to 370 (YQTF…LENF), 469 to 520 (VSRT…YLSG), 538 to 571 (SPAR…SDDS), and 656 to 712 (SAWP…GTKP). Residues 13–24 (KQQNYQQTSQET) are compositionally biased toward polar residues. The span at 66–75 (PSGTAAAVAA) shows a compositional bias: low complexity. A compositionally biased stretch (pro residues) spans 124-134 (PQPPPPQPQPL). Low complexity predominate over residues 213 to 226 (SQSFPTSSTYSSSV). Residues 252-261 (TASSSLAPGQ) show a composition bias toward polar residues. Low complexity-rich tracts occupy residues 278–291 (QQQQ…QQQQ) and 339–353 (SPSS…VGRS). 2 positions are modified to phosphoserine: S339 and S345. Phosphothreonine is present on T472. A compositionally biased stretch (polar residues) spans 541–563 (RVNSNSKAKPESVSTCSVTSPDD). 2 positions are modified to phosphoserine: S568 and S683. T696 carries the post-translational modification Phosphothreonine. At S805 the chain carries Phosphoserine. K811 participates in a covalent cross-link: Glycyl lysine isopeptide (Lys-Gly) (interchain with G-Cter in SUMO2). K819 is covalently cross-linked (Glycyl lysine isopeptide (Lys-Gly) (interchain with G-Cter in SUMO1)). S880 and S892 each carry phosphoserine. A Glycyl lysine isopeptide (Lys-Gly) (interchain with G-Cter in SUMO1); alternate cross-link involves residue K901. Residue K901 forms a Glycyl lysine isopeptide (Lys-Gly) (interchain with G-Cter in SUMO2); alternate linkage. A compositionally biased stretch (polar residues) spans 937–947 (KVQSWFESSLS). 5 disordered regions span residues 937–1299 (KVQS…ETPD), 1344–1570 (FACK…PLDP), 1613–1637 (VVNS…SSSS), 1746–1775 (AAAA…SARG), and 1794–1819 (EEAA…GGEA). Basic and acidic residues predominate over residues 950–962 (KPGEEGPDGERAP). Residues 996–1005 (KSLRSRRVHR) show a composition bias toward basic residues. Residue S1064 is modified to Phosphoserine. The residue at position 1068 (T1068) is a Phosphothreonine. Low complexity predominate over residues 1101 to 1119 (PSPKAASSPSNPAALPVAS). S1122 carries the post-translational modification Phosphoserine. 2 short sequence motifs (nuclear localization signal) span residues 1160-1177 (RRRP…TKKL) and 1223-1240 (KRKS…RNLV). The segment covering 1242 to 1252 (RSRSSSSSNAS) has biased composition (low complexity). A phosphoserine mark is found at S1352, S1358, and S1374. Residue K1425 forms a Glycyl lysine isopeptide (Lys-Gly) (interchain with G-Cter in SUMO2) linkage. S1431 is subject to Phosphoserine. Basic residues predominate over residues 1444–1453 (PKKRSRKGRA). Composition is skewed to polar residues over residues 1482–1491 (SGTQGASEDN) and 1517–1534 (QPQT…YSSY). Positions 1535–1545 (SKRKRLTRGRA) are enriched in basic residues. Positions 1628–1637 (SSSASSSSSS) are enriched in low complexity. The segment at 1780–1835 (LQSCYCCDGREDGGEEAAPADKGRKHECSKEAPAEPGGEAQEHWVHEACAVWTGGV) adopts a C2HC pre-PHD-type zinc-finger fold. Residues 1798–1812 (PADKGRKHECSKEAP) show a composition bias toward basic and acidic residues. The PHD-type zinc-finger motif lies at 1855–1903 (MMCSSCQEAGATIGCCHKGCLHTYHYPCASDAGCIFIEENFSLKCPKHK).

In terms of tissue distribution, expressed in all tissues examined with higher expression in the heart and brain. No expression was seen in the corpus callosum of the brain.

The protein localises to the cytoplasm. It localises to the nucleus. Transcriptional regulator of the circadian clock components: CLOCK, BMAL1, BMAL2, PER1/3, CRY1/2, NR1D1/2 and RORA/C. Positively regulates the transcriptional activity of CLOCK a core component of the circadian clock. Regulates transcription through chromatin remodeling by interacting with other proteins in chromatin as well as proteins in the basic transcriptional machinery. May be important for embryonic and postnatal development. May be involved in neuronal differentiation. This is Retinoic acid-induced protein 1 (RAI1) from Homo sapiens (Human).